The primary structure comprises 517 residues: GMP synthase [glutamine-hydrolyzing] (517 aa).

One can recognise a Glutamine amidotransferase type-1 domain in the interval 11–202 (KIIVLDFGSQ…AFKVCGAKAN (192 aa)). Catalysis depends on Cys88, which acts as the Nucleophile. Catalysis depends on residues His176 and Glu178. The region spanning 203-392 (WTMDDFIEMQ…LGIPHDLVWR (190 aa)) is the GMPS ATP-PPase domain. 230–236 (SGGVDSS) serves as a coordination point for ATP.

Homodimer.

It carries out the reaction XMP + L-glutamine + ATP + H2O = GMP + L-glutamate + AMP + diphosphate + 2 H(+). It participates in purine metabolism; GMP biosynthesis; GMP from XMP (L-Gln route): step 1/1. Its function is as follows. Catalyzes the synthesis of GMP from XMP. This Lactobacillus johnsonii (strain CNCM I-12250 / La1 / NCC 533) protein is GMP synthase [glutamine-hydrolyzing].